A 487-amino-acid polypeptide reads, in one-letter code: Serralysin (487 aa).

Residues 1-16 (MQSTKKAIEITESNFA) constitute a propeptide that is removed on maturation. His192 serves as a coordination point for Zn(2+). Glu193 is a catalytic residue. Positions 196, 202, and 232 each coordinate Zn(2+). Positions 269, 271, 273, 301, 303, 304, 306, 343, 345, 350, 352, 354, 359, 361, 363, 367, 368, 369, 372, 376, 377, 378, 379, 381, 385, 386, 387, 388, 390, 399, 406, and 416 each coordinate Ca(2+). 2 Hemolysin-type calcium-binding repeats span residues 348–365 (IGGS…NNVL) and 366–383 (KGGA…ADEL).

This sequence belongs to the peptidase M10B family. Ca(2+) is required as a cofactor. The cofactor is Zn(2+).

The protein localises to the secreted. It carries out the reaction Preferential cleavage of bonds with hydrophobic residues in P1'.. In terms of biological role, naturally present in the silkworm intestine and allows the emerging moth to dissolve its cocoon. This chain is Serralysin, found in Serratia marcescens (strain ATCC 21074 / E-15).